We begin with the raw amino-acid sequence, 114 residues long: NAD(P)H-quinone oxidoreductase subunit M (114 aa).

This sequence belongs to the complex I NdhM subunit family. NDH-1 can be composed of about 15 different subunits; different subcomplexes with different compositions have been identified which probably have different functions.

Its subcellular location is the cellular thylakoid membrane. It carries out the reaction a plastoquinone + NADH + (n+1) H(+)(in) = a plastoquinol + NAD(+) + n H(+)(out). It catalyses the reaction a plastoquinone + NADPH + (n+1) H(+)(in) = a plastoquinol + NADP(+) + n H(+)(out). Functionally, NDH-1 shuttles electrons from an unknown electron donor, via FMN and iron-sulfur (Fe-S) centers, to quinones in the respiratory and/or the photosynthetic chain. The immediate electron acceptor for the enzyme in this species is believed to be plastoquinone. Couples the redox reaction to proton translocation, and thus conserves the redox energy in a proton gradient. Cyanobacterial NDH-1 also plays a role in inorganic carbon-concentration. The protein is NAD(P)H-quinone oxidoreductase subunit M of Acaryochloris marina (strain MBIC 11017).